The primary structure comprises 278 residues: Small ribosomal subunit protein uS2 (278 aa).

Position 2 is an N-acetylserine (Ser-2). A disordered region spans residues Thr-258–Trp-278.

This sequence belongs to the universal ribosomal protein uS2 family. In terms of assembly, component of the small ribosomal subunit. Mature ribosomes consist of a small (40S) and a large (60S) subunit. The 40S subunit contains about 33 different proteins and 1 molecule of RNA (18S). The 60S subunit contains about 49 different proteins and 3 molecules of RNA (28S, 5.8S and 5S). Interacts with rps-21.

The protein resides in the cytoplasm. Required for the assembly and/or stability of the 40S ribosomal subunit. Required for the processing of the 20S rRNA-precursor to mature 18S rRNA in a late step of the maturation of 40S ribosomal subunits. The chain is Small ribosomal subunit protein uS2 from Caenorhabditis briggsae.